Consider the following 587-residue polypeptide: Chaperonin CPN60, mitochondrial (587 aa).

A mitochondrion-targeting transit peptide spans 1–32 (MYRLISSIASKARVARNCTSQIGSRLSSTRNY).

The protein belongs to the chaperonin (HSP60) family.

Its subcellular location is the mitochondrion. Its function is as follows. Implicated in mitochondrial protein import and macromolecular assembly. May facilitate the correct folding of imported proteins. May also prevent misfolding and promote the refolding and proper assembly of unfolded polypeptides generated under stress conditions in the mitochondrial matrix. This Brassica napus (Rape) protein is Chaperonin CPN60, mitochondrial.